A 421-amino-acid chain; its full sequence is ATP-dependent RNA helicase RhlB (421 aa).

The Q motif signature appears at 9 to 37 (QKFSDFALHPKVVEALEKKGFHNCTPIQA). The 180-residue stretch at 40–219 (LPLTLAGRDV…FEQMNNAEYI (180 aa)) folds into the Helicase ATP-binding domain. Residue 53–60 (AQTGTGKT) coordinates ATP. The DEAD box motif lies at 165–168 (DEAD). One can recognise a Helicase C-terminal domain in the interval 245–390 (RLLQTLIEEE…VSKYNPDALM (146 aa)). The segment at 392 to 421 (DLPKPLRLTRPRTGNGPRRTGAPRNRRRSG) is disordered. Low complexity predominate over residues 402-414 (PRTGNGPRRTGAP).

The protein belongs to the DEAD box helicase family. RhlB subfamily. In terms of assembly, component of the RNA degradosome, which is a multiprotein complex involved in RNA processing and mRNA degradation.

Its subcellular location is the cytoplasm. The enzyme catalyses ATP + H2O = ADP + phosphate + H(+). Functionally, DEAD-box RNA helicase involved in RNA degradation. Has RNA-dependent ATPase activity and unwinds double-stranded RNA. In Escherichia fergusonii (strain ATCC 35469 / DSM 13698 / CCUG 18766 / IAM 14443 / JCM 21226 / LMG 7866 / NBRC 102419 / NCTC 12128 / CDC 0568-73), this protein is ATP-dependent RNA helicase RhlB.